Consider the following 181-residue polypeptide: Crossover junction endodeoxyribonuclease RuvC (181 aa).

Active-site residues include D7, E67, and D139. Positions 7, 67, and 139 each coordinate Mg(2+).

It belongs to the RuvC family. As to quaternary structure, homodimer which binds Holliday junction (HJ) DNA. The HJ becomes 2-fold symmetrical on binding to RuvC with unstacked arms; it has a different conformation from HJ DNA in complex with RuvA. In the full resolvosome a probable DNA-RuvA(4)-RuvB(12)-RuvC(2) complex forms which resolves the HJ. It depends on Mg(2+) as a cofactor.

It is found in the cytoplasm. The catalysed reaction is Endonucleolytic cleavage at a junction such as a reciprocal single-stranded crossover between two homologous DNA duplexes (Holliday junction).. Its function is as follows. The RuvA-RuvB-RuvC complex processes Holliday junction (HJ) DNA during genetic recombination and DNA repair. Endonuclease that resolves HJ intermediates. Cleaves cruciform DNA by making single-stranded nicks across the HJ at symmetrical positions within the homologous arms, yielding a 5'-phosphate and a 3'-hydroxyl group; requires a central core of homology in the junction. The consensus cleavage sequence is 5'-(A/T)TT(C/G)-3'. Cleavage occurs on the 3'-side of the TT dinucleotide at the point of strand exchange. HJ branch migration catalyzed by RuvA-RuvB allows RuvC to scan DNA until it finds its consensus sequence, where it cleaves and resolves the cruciform DNA. This is Crossover junction endodeoxyribonuclease RuvC from Cupriavidus necator (strain ATCC 17699 / DSM 428 / KCTC 22496 / NCIMB 10442 / H16 / Stanier 337) (Ralstonia eutropha).